Here is a 522-residue protein sequence, read N- to C-terminus: DNA damage-binding protein cmr1 (522 aa).

Polar residues predominate over residues 34–47 (VFTPTLPNRATGSQ). Disordered stretches follow at residues 34–89 (VFTP…KRKA) and 217–239 (QEKPTSVKQEDEDEEDDDPDPVL). Residues 49 to 59 (KTKKKPAPKKV) are compositionally biased toward basic residues. The stretch at 182–223 (LTPERVYTMTFHPSETKPLIFAGDKMGHLGILDASQEKPTSV) is one WD 1 repeat. The span at 226–236 (EDEDEEDDDPD) shows a compositional bias: acidic residues. 6 WD repeats span residues 244-284 (PHTR…SVER), 294-331 (VPLSGLDMAADDPNTLYWTTLEGEFGRYDMRTPKQGSV), 336-376 (LSEK…RREP), 381-422 (EHQS…ASWK), 445-488 (GRWV…LAQL), and 491-522 (DGITAVPAVAVFHRSKNWIAGGTASGKICLWM).

The protein belongs to the WD repeat DDB2/WDR76 family.

Its function is as follows. DNA-binding protein that binds to both single- and double-stranded DNA. Binds preferentially to UV-damaged DNA. May be involved in DNA-metabolic processes. The chain is DNA damage-binding protein cmr1 from Aspergillus oryzae (strain ATCC 42149 / RIB 40) (Yellow koji mold).